The chain runs to 434 residues: Cysteine proteinase 6 (434 aa).

The first 19 residues, 1 to 19 (MKVLSALCVLLVSVATAKQ), serve as a signal peptide directing secretion. The propeptide at 20–113 (QLSELQYRNA…SEKVFGGVQA (94 aa)) is activation peptide. 2 disulfide bridges follow: cysteine 133/cysteine 178 and cysteine 169/cysteine 211. Residue cysteine 136 is part of the active site. An N-linked (GlcNAc...) asparagine glycan is attached at asparagine 227. Cysteine 269 and cysteine 416 are disulfide-bonded. Histidine 276 is a catalytic residue. The segment at 285 to 384 (SGSSGSQSQS…GGNSNSGDYP (100 aa)) is disordered. Residues 288–347 (SGSQSQSAGSQSQSSNNNWSESSQSQDSNSWSQSSQSQSSQDSNSWSQSSQSQGSNSFTG) are compositionally biased toward low complexity. A glycan (N-linked (GlcNAc...) asparagine) is linked at asparagine 305. The span at 348–358 (AGTGSGSGSVS) shows a compositional bias: gly residues. Over residues 359 to 381 (GSGSASGSSSFSGSSNGGNSNSG) the composition is skewed to low complexity. The active site involves asparagine 394.

It belongs to the peptidase C1 family.

The protein localises to the lysosome. This is Cysteine proteinase 6 (cprF) from Dictyostelium discoideum (Social amoeba).